The chain runs to 429 residues: MTNMSWSFLTRLLEEIHNHSTFVGKVWLTVLVVFRIVLTAVGGESIYSDEQTKFTCNTRQPGCDNVCYDAFAPLSHVRFWVFQIVVISTPSVMYLGYAVHRLARASQDERRRASRRRPSRRAPRPPLPLPPPPHPGWPEPADLGEEEPMLGLGEEDEDPGVAEGLGEDEEAEDTGAAKGAGGDTKVAGVPGPAGQHDGRRRIQREGLMRVYVAQLVARAAFEVAFLVGQYLLYGFEVRPFFACSRQPCPHVVDCFVSRPTEKTVFLLVMYVVSCLCLLLNLCEMAHLGLGNAQDAVRGRRPLPASPGPMPRPPPCALPAAPSGLACPPDYSLVVRTAEHARAQDQELASLALQALQDRRALGDLDSPPGPGLPANARGPPKPGAPASGSGSATSGGTVGGQGRQGIKPRMGSEKGSGSSSREGKTTVWI.

The Cytoplasmic segment spans residues 1–25; sequence MTNMSWSFLTRLLEEIHNHSTFVGK. Residues 26-46 traverse the membrane as a helical segment; sequence VWLTVLVVFRIVLTAVGGESI. At 47 to 78 the chain is on the extracellular side; sequence YSDEQTKFTCNTRQPGCDNVCYDAFAPLSHVR. The helical transmembrane segment at 79 to 99 threads the bilayer; the sequence is FWVFQIVVISTPSVMYLGYAV. Topologically, residues 100–214 are cytoplasmic; that stretch reads HRLARASQDE…EGLMRVYVAQ (115 aa). Positions 106-200 are disordered; the sequence is SQDERRRASR…GPAGQHDGRR (95 aa). Basic residues predominate over residues 112–123; the sequence is RASRRRPSRRAP. Residues 124–138 show a composition bias toward pro residues; sequence RPPLPLPPPPHPGWP. Over residues 142–173 the composition is skewed to acidic residues; sequence DLGEEEPMLGLGEEDEDPGVAEGLGEDEEAED. The helical transmembrane segment at 215 to 235 threads the bilayer; it reads LVARAAFEVAFLVGQYLLYGF. Over 236–263 the chain is Extracellular; the sequence is EVRPFFACSRQPCPHVVDCFVSRPTEKT. The chain crosses the membrane as a helical span at residues 264 to 284; the sequence is VFLLVMYVVSCLCLLLNLCEM. At 285 to 429 the chain is on the cytoplasmic side; sequence AHLGLGNAQD…SREGKTTVWI (145 aa). Disordered regions lie at residues 296–316 and 361–429; these read VRGR…PPCA and LGDL…TVWI. Residues 303–316 are compositionally biased toward pro residues; the sequence is PASPGPMPRPPPCA. Position 366 is a phosphoserine (Ser366). Positions 372–395 are enriched in low complexity; it reads LPANARGPPKPGAPASGSGSATSG.

It belongs to the connexin family. Gamma-type subfamily. As to quaternary structure, a connexon is composed of a hexamer of connexins. Interacts with TJP1.

It localises to the cell membrane. The protein localises to the cell junction. It is found in the gap junction. In terms of biological role, one gap junction consists of a cluster of closely packed pairs of transmembrane channels, the connexons, through which materials of low MW diffuse from one cell to a neighboring cell. May play a role in myelination in central and peripheral nervous systems. The protein is Gap junction gamma-2 protein (GJC2) of Bos taurus (Bovine).